A 351-amino-acid chain; its full sequence is Peroxisomal membrane protein PEX14 (351 aa).

The interval 54-75 (KARTGTVQASPSQQSVVPPRPP) is disordered. Over residues 60–70 (VQASPSQQSVV) the composition is skewed to low complexity. Positions 83-91 (APPLPERDW) match the SH3-binding motif. Residues 243 to 351 (APQLSTPPSE…RGIPAWQLNA (109 aa)) form a disordered region. Residues 245–258 (QLSTPPSESTSRQS) are compositionally biased toward polar residues. Positions 283–293 (VLSREKDKDVN) are enriched in basic and acidic residues. The span at 294–303 (SDSIAQYEQR) shows a compositional bias: polar residues. The segment covering 320–334 (SASNGGSSTTSGVAG) has biased composition (low complexity).

Belongs to the peroxin-14 family. Interacts with PEX13 (via SH3 domain); forming the PEX13-PEX14 docking complex. Interacts with PEX5 (via WxxxF/Y motifs).

It is found in the peroxisome membrane. Its function is as follows. Component of the PEX13-PEX14 docking complex, a translocon channel that specifically mediates the import of peroxisomal cargo proteins bound to PEX5 receptor. The PEX13-PEX14 docking complex forms a large import pore which can be opened to a diameter of about 9 nm. Mechanistically, PEX5 receptor along with cargo proteins associates with the PEX14 subunit of the PEX13-PEX14 docking complex in the cytosol, leading to the insertion of the receptor into the organelle membrane with the concomitant translocation of the cargo into the peroxisome matrix. The protein is Peroxisomal membrane protein PEX14 of Pichia angusta (Yeast).